The following is a 333-amino-acid chain: MGLLERLRKEWFIAGIALVIAAARLEPAVGVKGGPLKPEITITYIAVSAIFFNSGLSLKTEELTSALMHVKLHLFVQIFTLVFFPTAIWLFLQLLSITPINEWLLKGLQTVGCMPPPVSSAVILTKAVGGNEAAAIFNSAFGSFLLGSSSSVPFTSIFSQLFMTVVVPLIIGQIVRRYIKDWLERRKPPFGTISSCVLLMIIYTTFCDTFANPNIDLDKFSLIIIVFIIFSVQMSFMFLTFLFSTRSNSGFTPADTVAIIFCSTHKSLTLGIPMLKIVFAGYEHLSLISVPLLIYHPAQILLGSLLVPTIKSWMVSRQKALKLTRQPKVPVKV.

Topologically, residues 1 to 10 (MGLLERLRKE) are cytoplasmic. Residues 11–31 (WFIAGIALVIAAARLEPAVGV) form a helical membrane-spanning segment. Residues 32–37 (KGGPLK) lie on the Extracellular side of the membrane. Residues 38–58 (PEITITYIAVSAIFFNSGLSL) form a helical membrane-spanning segment. The Cytoplasmic segment spans residues 59–71 (KTEELTSALMHVK). A helical membrane pass occupies residues 72–92 (LHLFVQIFTLVFFPTAIWLFL). The Extracellular portion of the chain corresponds to 93 to 103 (QLLSITPINEW). A helical membrane pass occupies residues 104–124 (LLKGLQTVGCMPPPVSSAVIL). The Cytoplasmic portion of the chain corresponds to 125–126 (TK). The helical transmembrane segment at 127–147 (AVGGNEAAAIFNSAFGSFLLG) threads the bilayer. Residues 148–151 (SSSS) are Extracellular-facing. Residues 152–172 (VPFTSIFSQLFMTVVVPLIIG) traverse the membrane as a helical segment. Topologically, residues 173 to 189 (QIVRRYIKDWLERRKPP) are cytoplasmic. A helical transmembrane segment spans residues 190 to 210 (FGTISSCVLLMIIYTTFCDTF). Over 211–222 (ANPNIDLDKFSL) the chain is Extracellular. The helical transmembrane segment at 223-243 (IIIVFIIFSVQMSFMFLTFLF) threads the bilayer. At 244–258 (STRSNSGFTPADTVA) the chain is on the cytoplasmic side. The helical transmembrane segment at 259 to 279 (IIFCSTHKSLTLGIPMLKIVF) threads the bilayer. At 280 to 286 (AGYEHLS) the chain is on the extracellular side. A helical membrane pass occupies residues 287–307 (LISVPLLIYHPAQILLGSLLV). At 308–333 (PTIKSWMVSRQKALKLTRQPKVPVKV) the chain is on the cytoplasmic side.

Belongs to the bile acid:sodium symporter (BASS) (TC 2.A.28) family.

It localises to the cell membrane. The protein resides in the endoplasmic reticulum membrane. Its subcellular location is the golgi apparatus membrane. Involved in teeth and skeletal development. Has an essential role in the biosynthesis and trafficking of glycosaminoglycans and glycoproteins to produce a proper functioning extracellular matrix. Required for extracellular matrix mineralization. Also involved in the regulation of cellular calcium homeostasis. Does not show transport activity towards bile acids or steroid sulfates. The polypeptide is Sodium/bile acid cotransporter 7 (SLC10A7) (Gallus gallus (Chicken)).